A 103-amino-acid polypeptide reads, in one-letter code: Acyl carrier protein homolog (103 aa).

Positions 3–87 (ELTSEIKKEI…ETLEKVVQTT (85 aa)) constitute a Carrier domain. Ser45 is subject to O-(pantetheine 4'-phosphoryl)serine.

Post-translationally, 4'-phosphopantetheine is transferred from CoA to a specific serine of the apo-ACP-like protein.

The protein localises to the cytoplasm. Its function is as follows. Acyl carrier protein. The protein is Acyl carrier protein homolog of Clostridium acetobutylicum (strain ATCC 824 / DSM 792 / JCM 1419 / IAM 19013 / LMG 5710 / NBRC 13948 / NRRL B-527 / VKM B-1787 / 2291 / W).